Consider the following 379-residue polypeptide: Galactose-1-phosphate uridylyltransferase (379 aa).

Residues 1–15 (MSQSGADPEQRQQAS) are compositionally biased toward polar residues. The disordered stretch occupies residues 1–20 (MSQSGADPEQRQQASEADAM). Cysteine 75 is a binding site for Zn(2+). Residues alanine 81, 97 to 98 (ND), and asparagine 173 each bind UDP-alpha-D-glucose. Histidine 184 provides a ligand contact to Zn(2+). Residue histidine 186 is the Tele-UMP-histidine intermediate of the active site. Glutamine 188 is a UDP-alpha-D-glucose binding site. Zn(2+)-binding residues include glutamate 202, histidine 301, histidine 319, and histidine 321. Residues 334–337 (KFMV) and 339–340 (YE) each bind UDP-alpha-D-glucose.

It belongs to the galactose-1-phosphate uridylyltransferase type 1 family. As to quaternary structure, homodimer. The cofactor is Zn(2+).

It carries out the reaction alpha-D-galactose 1-phosphate + UDP-alpha-D-glucose = alpha-D-glucose 1-phosphate + UDP-alpha-D-galactose. The protein operates within carbohydrate metabolism; galactose metabolism. In terms of biological role, plays an important role in galactose metabolism. In Rattus norvegicus (Rat), this protein is Galactose-1-phosphate uridylyltransferase (Galt).